The sequence spans 147 residues: uncharacterized protein (147 aa).

Helical transmembrane passes span 21-41 (LMLW…IVFV) and 67-87 (ALFG…SIPL).

It is found in the cell membrane. This is an uncharacterized protein from Ureaplasma parvum serovar 3 (strain ATCC 700970).